The following is a 128-amino-acid chain: Gene 39 protein (128 aa).

This chain is Gene 39 protein (39), found in Mycobacterium (Mycobacteriophage D29).